We begin with the raw amino-acid sequence, 326 residues long: Acetyl-coenzyme A carboxylase carboxyl transferase subunit alpha (326 aa).

Residues 44–298 (QLESRAEQLR…KEALLFHLNT (255 aa)) form the CoA carboxyltransferase C-terminal domain.

Belongs to the AccA family. As to quaternary structure, acetyl-CoA carboxylase is a heterohexamer composed of biotin carboxyl carrier protein (AccB), biotin carboxylase (AccC) and two subunits each of ACCase subunit alpha (AccA) and ACCase subunit beta (AccD).

The protein resides in the cytoplasm. The catalysed reaction is N(6)-carboxybiotinyl-L-lysyl-[protein] + acetyl-CoA = N(6)-biotinyl-L-lysyl-[protein] + malonyl-CoA. It functions in the pathway lipid metabolism; malonyl-CoA biosynthesis; malonyl-CoA from acetyl-CoA: step 1/1. Component of the acetyl coenzyme A carboxylase (ACC) complex. First, biotin carboxylase catalyzes the carboxylation of biotin on its carrier protein (BCCP) and then the CO(2) group is transferred by the carboxyltransferase to acetyl-CoA to form malonyl-CoA. The sequence is that of Acetyl-coenzyme A carboxylase carboxyl transferase subunit alpha from Synechocystis sp. (strain ATCC 27184 / PCC 6803 / Kazusa).